Consider the following 209-residue polypeptide: Translation initiation factor IF-3 (209 aa).

The protein belongs to the IF-3 family. As to quaternary structure, monomer.

The protein localises to the cytoplasm. IF-3 binds to the 30S ribosomal subunit and shifts the equilibrium between 70S ribosomes and their 50S and 30S subunits in favor of the free subunits, thus enhancing the availability of 30S subunits on which protein synthesis initiation begins. The polypeptide is Translation initiation factor IF-3 (Chlorobium phaeovibrioides (strain DSM 265 / 1930) (Prosthecochloris vibrioformis (strain DSM 265))).